The chain runs to 128 residues: Glycine cleavage system H protein (128 aa).

Positions 24–106 constitute a Lipoyl-binding domain; that stretch reads VATVGITAFA…YNNGWLLKIK (83 aa). At K65 the chain carries N6-lipoyllysine.

Belongs to the GcvH family. The glycine cleavage system is composed of four proteins: P, T, L and H. The cofactor is (R)-lipoate.

Its function is as follows. The glycine cleavage system catalyzes the degradation of glycine. The H protein shuttles the methylamine group of glycine from the P protein to the T protein. The chain is Glycine cleavage system H protein from Acaryochloris marina (strain MBIC 11017).